A 2193-amino-acid chain; its full sequence is Genome polyprotein (2193 aa).

Positions 1 to 22 (MGSQVSTQRSGSHENSNSATEG) are disordered. The N-myristoyl glycine; by host moiety is linked to residue Gly2. The Cytoplasmic segment spans residues 2–1503 (GSQVSTQRSG…HLNRAVLVMQ (1502 aa)). Amphipathic alpha-helix stretches follow at residues 566–588 (GDRV…LTPA) and 568–588 (RVAD…LTPA). Active-site for protease 2A activity residues include His883 and Asp901. The Zn(2+) site is built by Cys918 and Cys920. Catalysis depends on Cys972, which acts as the For protease 2A activity. Residues Cys978 and His980 each contribute to the Zn(2+) site. Residues 1112-1184 (SASWLKKFND…EQSAASQEDL (73 aa)) form a membrane-binding region. Residues 1112–1250 (SASWLKKFND…SPGTGKSLAT (139 aa)) are oligomerization. The segment at 1133 to 1137 (FNKIS) is RNA-binding. The SF3 helicase domain maps to 1216–1374 (EKRMNNYMQF…YKTDLGRLDA (159 aa)). 1240-1247 (GSPGTGKS) provides a ligand contact to ATP. The Zn(2+) site is built by Cys1381, Cys1392, and Cys1397. The C4-type; degenerate zinc-finger motif lies at 1381–1397 (CTENNTANFKRCSPLVC). An RNA-binding region spans residues 1424–1431 (EYNNRSAI). The tract at residues 1435–1440 (IEALFQ) is oligomerization. An intramembrane segment occupies 1504–1519 (SIATVVAVVSLVYVIY). The Cytoplasmic portion of the chain corresponds to 1520–2193 (KLFAGFQGAY…NLRRNWLELF (674 aa)). Residue Tyr1529 is modified to O-(5'-phospho-RNA)-tyrosine. The Peptidase C3 domain occupies 1549–1727 (GPSLDFALSL…FCAGLKRSYF (179 aa)). Residues His1588, Glu1619, and Cys1695 each act as for protease 3C activity in the active site. Positions 1958-2073 (GSLFAFDYSG…ASYPFPIDCL (116 aa)) constitute a RdRp catalytic domain. Mg(2+) contacts are provided by Asp1964 and Asp2060.

This sequence belongs to the picornaviruses polyprotein family. In terms of assembly, interacts with capsid protein VP1 and capsid protein VP3 to form heterotrimeric protomers. Interacts with capsid protein VP0, and capsid protein VP3 to form heterotrimeric protomers. Five protomers subsequently associate to form pentamers which serve as building blocks for the capsid. Interacts with capsid protein VP2, capsid protein VP3 and capsid protein VP4 following cleavage of capsid protein VP0. Interacts with host SCARB2. Interacts with host ARF6; this interaction mediates viral endocytosis. As to quaternary structure, interacts with capsid protein VP1 and capsid protein VP3 in the mature capsid. Interacts with host SCARB2. In terms of assembly, interacts with capsid protein VP0 and capsid protein VP1 to form heterotrimeric protomers. Five protomers subsequently associate to form pentamers which serve as building blocks for the capsid. Interacts with capsid protein VP4 in the mature capsid. Interacts with protein 2C; this interaction may be important for virion morphogenesis. Interacts with capsid protein VP1 and capsid protein VP3. As to quaternary structure, homodimer. Interacts with host SPOP; this interaction promotes protease 2A ubiquitination and subsequent degradation. In terms of assembly, interacts with host BAX; this interaction activates the mitochondrial apoptotic pathway. Interacts with host ILF2. Homohexamer; forms a hexameric ring structure with 6-fold symmetry characteristic of AAA+ ATPases. Interacts (via N-terminus) with host RTN3 (via reticulon domain); this interaction is important for viral replication. Interacts with capsid protein VP3; this interaction may be important for virion morphogenesis. As to quaternary structure, interacts with protein 3CD. In terms of assembly, homodimer. Interacts with host GBF1. Interacts (via GOLD domain) with host ACBD3 (via GOLD domain); this interaction allows the formation of a viral protein 3A/ACBD3 heterotetramer with a 2:2 stoichiometry, which will stimulate the recruitment of host PI4KB in order to synthesize PI4P at the viral RNA replication sites. Interacts with RNA-directed RNA polymerase. As to quaternary structure, interacts with host IFIH1/MDA5; this interaction inhibits host IFIH1. Interacts with host RIGI. In terms of assembly, interacts with protein 3AB and with RNA-directed RNA polymerase. Interacts with host PPP1R15A. Interacts with Viral protein genome-linked and with protein 3CD. Interacts with host NLRP3. The cofactor is Mg(2+). Specific enzymatic cleavages in vivo by the viral proteases yield processing intermediates and the mature proteins. In terms of processing, myristoylation is required for the formation of pentamers during virus assembly. Further assembly of 12 pentamers and a molecule of genomic RNA generates the provirion. Post-translationally, during virion maturation, immature virions are rendered infectious following cleavage of VP0 into VP4 and VP2. This maturation seems to be an autocatalytic event triggered by the presence of RNA in the capsid and it is followed by a conformational change infectious virion. Myristoylation is required during RNA encapsidation and formation of the mature virus particle. In terms of processing, VPg is uridylylated by the polymerase into VPg-pUpU. This acts as a nucleotide-peptide primer for the genomic RNA replication.

Its subcellular location is the virion. It localises to the host cytoplasm. The protein resides in the host cytoplasmic vesicle membrane. The protein localises to the host nucleus. It carries out the reaction a ribonucleoside 5'-triphosphate + H2O = a ribonucleoside 5'-diphosphate + phosphate + H(+). The enzyme catalyses Selective cleavage of Tyr-|-Gly bond in the picornavirus polyprotein.. It catalyses the reaction RNA(n) + a ribonucleoside 5'-triphosphate = RNA(n+1) + diphosphate. The catalysed reaction is Selective cleavage of Gln-|-Gly bond in the poliovirus polyprotein. In other picornavirus reactions Glu may be substituted for Gln, and Ser or Thr for Gly.. With respect to regulation, replication or transcription is subject to high level of random mutations by the nucleotide analog ribavirin. In terms of biological role, forms an icosahedral capsid of pseudo T=3 symmetry with capsid proteins VP2 and VP3. The capsid is 300 Angstroms in diameter, composed of 60 copies of each capsid protein and enclosing the viral positive strand RNA genome. Capsid protein VP1 mainly forms the vertices of the capsid. Capsid protein VP1, together with VP2, interacts with host cell receptor SCARB2 to provide virion attachment to target host cells. This attachment induces virion internalization predominantly through clathrin-dependent endocytosis. After binding to its receptor, the capsid undergoes conformational changes. Capsid protein VP1 N-terminus (that contains an amphipathic alpha-helix) and capsid protein VP4 are externalized. Together, they shape a pore in the host membrane through which viral genome is translocated to host cell cytoplasm. Forms an icosahedral capsid of pseudo T=3 symmetry with capsid proteins VP2 and VP3. The capsid is 300 Angstroms in diameter, composed of 60 copies of each capsid protein and enclosing the viral positive strand RNA genome. Capsid protein VP2, together with VP1, interacts with host cell receptor SCARB2 to provide virion attachment to target host cells. Functionally, forms an icosahedral capsid of pseudo T=3 symmetry with capsid proteins VP2 and VP3. The capsid is 300 Angstroms in diameter, composed of 60 copies of each capsid protein and enclosing the viral positive strand RNA genome. Its function is as follows. Lies on the inner surface of the capsid shell. After binding to the host receptor, the capsid undergoes conformational changes. Capsid protein VP4 is released, Capsid protein VP1 N-terminus is externalized, and together, they shape a pore in the host membrane through which the viral genome is translocated into the host cell cytoplasm. In terms of biological role, component of immature procapsids, which is cleaved into capsid proteins VP4 and VP2 after maturation. Allows the capsid to remain inactive before the maturation step. Cysteine protease that cleaves viral polyprotein and specific host proteins. It is responsible for the autocatalytic cleavage between the P1 and P2 regions, which is the first cleavage occurring in the polyprotein. Also cleaves the host translation initiation factor EIF4G1, in order to shut down the capped cellular mRNA translation. Inhibits the host nucleus-cytoplasm protein and RNA trafficking by cleaving host members of the nuclear pores. Counteracts stress granule formation probably by antagonizing its assembly or promoting its dissassembly. Cleaves and inhibits host IFIH1/MDA5, thereby inhibiting the type-I IFN production and the establishment of the antiviral state. Cleaves and inhibits host MAVS, thereby inhibiting the type-I IFN production and the establishment of the antiviral state. Functionally, plays an essential role in the virus replication cycle by acting as a viroporin. Creates a pore in the host endoplasmic reticulum and as a consequence releases Ca2+ in the cytoplasm of infected cell. In turn, high levels of cytoplasmic calcium may trigger membrane trafficking and transport of viral ER-associated proteins to viroplasms, sites of viral genome replication. Also activates the mitochondrial apoptotic pathway by activating host BAX. Its function is as follows. Induces and associates with structural rearrangements of intracellular membranes. Displays RNA-binding, nucleotide binding and NTPase activities. May play a role in virion morphogenesis and viral RNA encapsidation by interacting with the capsid protein VP3. In terms of biological role, localizes the viral replication complex to the surface of membranous vesicles. Together with protein 3CD binds the Cis-Active RNA Element (CRE) which is involved in RNA synthesis initiation. Acts as a cofactor to stimulate the activity of 3D polymerase, maybe through a nucleid acid chaperone activity. Localizes the viral replication complex to the surface of membranous vesicles. It inhibits host cell endoplasmic reticulum-to-Golgi apparatus transport and causes the disassembly of the Golgi complex, possibly through GBF1 interaction. This would result in depletion of MHC, trail receptors and IFN receptors at the host cell surface. Plays an essential role in viral RNA replication by recruiting ACBD3 and PI4KB at the viral replication sites, thereby allowing the formation of the rearranged membranous structures where viral replication takes place. Functionally, acts as a primer for viral RNA replication and remains covalently bound to viral genomic RNA. VPg is uridylylated prior to priming replication into VPg-pUpU. The oriI viral genomic sequence may act as a template for this. The VPg-pUpU is then used as primer on the genomic RNA poly(A) by the RNA-dependent RNA polymerase to replicate the viral genome. During genome replication, the VPg-RNA linkage is removed by the host TDP2, thereby accelerating replication. During the late stage of the replication cycle, host TDP2 is excluded from sites of viral RNA synthesis and encapsidation, allowing for the generation of progeny virions. Its function is as follows. Involved in the viral replication complex and viral polypeptide maturation. It exhibits protease activity with a specificity and catalytic efficiency that is different from protease 3C. Protein 3CD lacks polymerase activity. Protein 3CD binds to the 5'UTR of the viral genome. Regulates host protein expression by interacting with host PPP1R15A to support viral replication. In terms of biological role, major viral protease that mediates proteolytic processing of the polyprotein. Cleaves host EIF5B, contributing to host translation shutoff. Also cleaves host PABPC1, contributing to host translation shutoff. Disassembles host cytoplasmic stress granules by cleaving host G3BP1, although this effect is less prononced than the inhibition induced by protease 2A. Cleaves host RIGI and thus contributes to the inhibition of type I interferon production. Cleaves host IRF7 and thus contributes to the inhibition of type I interferon production. Cleaves host HNRNPA1 thereby increasing the translation of apoptosis protease activating factor APAF1, leading to apoptosis of the host cell. Cleaves host NLRP1, triggers host N-glycine-mediated degradation of the autoinhibitory NLRP1 N-terminal fragment. Cleaves and inactivates host GSDMD, preventing GSDMD-mediated pyroptosis. Also promotes apoptosis in infected cell through cleaving of host PINX1, a telomere binding protein in order to facilitate viral release. Impairs host PML-NBs production via PML cleavage and counter its antiviral activities. Replicates the viral genomic RNA on the surface of intracellular membranes. May form linear arrays of subunits that propagate along a strong head-to-tail interaction called interface-I. Covalently attaches UMP to a tyrosine of VPg, which is used to prime RNA synthesis. The positive stranded RNA genome is first replicated at virus induced membranous vesicles, creating a dsRNA genomic replication form. This dsRNA is then used as template to synthesize positive stranded RNA genomes. ss(+)RNA genomes are either translated, replicated or encapsidated. Facilitates the assembly of NLRP3 inflammasome complex and stimulates the cleavage of host pro-CASP1 and the secretion of IL-1beta. The sequence is that of Genome polyprotein from Human enterovirus 71 (strain USA/BrCr/1970) (EV71).